We begin with the raw amino-acid sequence, 319 residues long: Cobalamin biosynthesis protein CbiB (319 aa).

5 helical membrane-spanning segments follow: residues 52–74 (IGGG…GVLA), 79–101 (IHPW…GRSL), 155–177 (GIIA…YKAV), 207–229 (YLPA…LSGW), and 296–318 (LMWV…LSGV).

It belongs to the CobD/CbiB family.

It is found in the cell membrane. It functions in the pathway cofactor biosynthesis; adenosylcobalamin biosynthesis; adenosylcobalamin from cob(II)yrinate a,c-diamide: step 4/7. Functionally, converts cobyric acid to cobinamide by the addition of aminopropanol on the F carboxylic group. However, the true cosubstrate could be (R)-1-amino-2-propanol O-2-phosphate, leading to cobinamide phosphate. The polypeptide is Cobalamin biosynthesis protein CbiB (Salmonella typhi).